The primary structure comprises 100 residues: Class II hydrophobin 4 (100 aa).

A signal peptide spans 1–17 (MQFYAIASLFLAGTAFA). 4 cysteine pairs are disulfide-bonded: cysteine 29–cysteine 79, cysteine 40–cysteine 70, cysteine 41–cysteine 53, and cysteine 80–cysteine 92.

It belongs to the cerato-ulmin hydrophobin family.

Its subcellular location is the secreted. The protein resides in the cell wall. Functionally, aerial growth, conidiation, and dispersal of filamentous fungi in the environment rely upon a capability of their secreting small amphipathic proteins called hydrophobins (HPBs) with low sequence identity. Class I can self-assemble into an outermost layer of rodlet bundles on aerial cell surfaces, conferring cellular hydrophobicity that supports fungal growth, development and dispersal; whereas Class II form highly ordered films at water-air interfaces through intermolecular interactions but contribute nothing to the rodlet structure. Does not seem to be important for the ability to cause seedling disease. This Gibberella moniliformis (Maize ear and stalk rot fungus) protein is Class II hydrophobin 4.